Consider the following 86-residue polypeptide: Conotoxin Ec15a (86 aa).

The N-terminal stretch at 1 to 23 is a signal peptide; that stretch reads MEKLTILILVATVLLAIQVLGQG. Residues 24 to 49 constitute a propeptide that is removed on maturation; sequence EGEKPPKEWVQQYAAKRLWALMKGPR. Residue Gln50 is modified to Pyrrolidone carboxylic acid.

This sequence belongs to the conotoxin O2 superfamily. Post-translationally, contains 4 disulfide bonds. As to expression, expressed by the venom duct.

It localises to the secreted. The sequence is that of Conotoxin Ec15a from Conus emaciatus (False virgin cone).